We begin with the raw amino-acid sequence, 378 residues long: Chloroplast stem-loop binding protein of 41 kDa b, chloroplastic (378 aa).

The transit peptide at 1-50 (MAKMMMLQQHQPSFSLLTSSLSDFNGAKLHLQVQYKRKVHQPKGALYVSA) directs the protein to the chloroplast. Ser240 bears the Phosphoserine mark.

The protein belongs to the NAD(P)-dependent epimerase/dehydratase family. As to quaternary structure, component of a complex made of CSP41A, CSP41B, ribosomes, and the plastid-encoded RNA polymerase. Interacts with CSP41A. Binds DNA when in complex with PRIN2. In terms of tissue distribution, highly expressed in seedlings, particularly in photosynthetically active organs. Mostly expressed in young and mature leaves, and, to a lower extent, in flowers. Low expression in etiolated seedlings compared to green seedlings.

The protein resides in the plastid. The protein localises to the chloroplast. It is found in the plastoglobule. It localises to the cytoplasm. In terms of biological role, binds and cleaves RNA, particularly in stem-loops. Associates with pre-ribosomal particles in chloroplasts, and participates in chloroplast ribosomal RNA metabolism, probably during the final steps of 23S rRNA maturation. May enhance transcription by the plastid-encoded polymerase and translation in plastid via the stabilization of ribosome assembly intermediates. Required for chloroplast integrity. Involved in the regulation of the circadian system. Involved in the regulation of heteroglycans and monosaccharide mobilization. Required for full expression of genes transcribed by the plastid-encoded RNA polymerase (PEP). Essential for embryo development. This chain is Chloroplast stem-loop binding protein of 41 kDa b, chloroplastic (CSP41B), found in Arabidopsis thaliana (Mouse-ear cress).